Consider the following 351-residue polypeptide: Adenine deaminase (351 aa).

His20, His22, and His200 together coordinate Zn(2+). Glu203 functions as the Proton donor in the catalytic mechanism. Zn(2+) is bound at residue Asp281. Asp282 provides a ligand contact to substrate.

Belongs to the metallo-dependent hydrolases superfamily. Adenosine and AMP deaminases family. Adenine deaminase type 2 subfamily. It depends on Zn(2+) as a cofactor.

It carries out the reaction adenine + H2O + H(+) = hypoxanthine + NH4(+). Catalyzes the hydrolytic deamination of adenine to hypoxanthine. Plays an important role in the purine salvage pathway and in nitrogen catabolism. This chain is Adenine deaminase, found in Cupriavidus pinatubonensis (strain JMP 134 / LMG 1197) (Cupriavidus necator (strain JMP 134)).